Here is a 57-residue protein sequence, read N- to C-terminus: Large ribosomal subunit protein bL33 (57 aa).

It belongs to the bacterial ribosomal protein bL33 family.

In Shewanella denitrificans (strain OS217 / ATCC BAA-1090 / DSM 15013), this protein is Large ribosomal subunit protein bL33.